The chain runs to 179 residues: Adenine phosphoribosyltransferase (179 aa).

Belongs to the purine/pyrimidine phosphoribosyltransferase family. In terms of assembly, homodimer.

Its subcellular location is the cytoplasm. The catalysed reaction is AMP + diphosphate = 5-phospho-alpha-D-ribose 1-diphosphate + adenine. It functions in the pathway purine metabolism; AMP biosynthesis via salvage pathway; AMP from adenine: step 1/1. Catalyzes a salvage reaction resulting in the formation of AMP, that is energically less costly than de novo synthesis. The chain is Adenine phosphoribosyltransferase from Helicobacter acinonychis (strain Sheeba).